The following is a 168-amino-acid chain: Photosystem I assembly protein Ycf3 (168 aa).

TPR repeat units follow at residues 35 to 68 (AFTY…EIDP), 72 to 105 (SYIL…NPFL), and 120 to 153 (GEQA…TPGN).

This sequence belongs to the Ycf3 family.

The protein localises to the plastid. It localises to the chloroplast thylakoid membrane. In terms of biological role, essential for the assembly of the photosystem I (PSI) complex. May act as a chaperone-like factor to guide the assembly of the PSI subunits. This chain is Photosystem I assembly protein Ycf3, found in Atropa belladonna (Belladonna).